Consider the following 228-residue polypeptide: Ornithine decarboxylase antizyme 1 (228 aa).

Residues 17 to 55 (REKEGDKPSATIHASRTMPLLSLHSRGGSSSESSRVSLH) are disordered. Positions 36-55 (LLSLHSRGGSSSESSRVSLH) are enriched in low complexity.

It belongs to the ODC antizyme family. As to quaternary structure, interacts with ODC1 and thereby sterically blocks ODC homodimerization. Forms a ternary complex with PSMB4 and OAZ1 before PSMB4 is incorporated into the 20S proteasome. Interacts with AZIN2; this interaction disrupts the interaction between the antizyme and ODC1. Interacts with FAM171A1.

Functionally, ornithine decarboxylase (ODC) antizyme protein that negatively regulates ODC activity and intracellular polyamine biosynthesis and uptake in response to increased intracellular polyamine levels. Binds to ODC monomers, inhibiting the assembly of the functional ODC homodimer, and targets the monomers for ubiquitin-independent proteolytic destruction by the 26S proteasome. Triggers ODC degradation by inducing the exposure of a cryptic proteasome-interacting surface of ODC. Stabilizes AZIN2 by interfering with its ubiquitination. Also inhibits cellular uptake of polyamines by inactivating the polyamine uptake transporter. SMAD1/OAZ1/PSMB4 complex mediates the degradation of the CREBBP/EP300 repressor SNIP1. Involved in the translocation of AZIN2 from ER-Golgi intermediate compartment (ERGIC) to the cytosol. The polypeptide is Ornithine decarboxylase antizyme 1 (OAZ1) (Homo sapiens (Human)).